The following is a 462-amino-acid chain: DEK domain-containing chromatin-associated protein 1 (462 aa).

Disordered regions lie at residues 18–91 (AVTE…TQGR) and 212–390 (KETK…RKEL). The span at 20 to 32 (TEKDTETKKKDEV) shows a compositional bias: basic and acidic residues. Residues 33-46 (EKDEAMEEKGEEID) are compositionally biased toward acidic residues. Positions 77 to 91 (PRSSGNKPLSITQGR) are enriched in polar residues. Over residues 267-276 (NGEDDVAPEE) the composition is skewed to acidic residues. Composition is skewed to basic and acidic residues over residues 277–303 (ENNKSEDTETEDEKDKAKEKTKSTDKK), 312–322 (EKPAAEEEKSI), and 347–360 (QKVDKDDSSKEKGK). The short motif at 344 to 351 (SKKQKVDK) is the Nuclear localization signal element. The region spanning 384–439 (EPTRKELHVVVTKILKEVDFNTATLSDILRKLGSHFGIDLMHRKAEVKDIITDAIN) is the DEK-C domain. 2 consecutive DNA-binding regions follow at residues 402 to 416 (DFNTATLSDILRKLG) and 431 to 435 (KDIIT). The interval 438–462 (INEMSDDDDEKEEDTEDEGEKEGKD) is disordered. Positions 441–462 (MSDDDDEKEEDTEDEGEKEGKD) are enriched in acidic residues.

As to quaternary structure, found in a mRNA splicing-dependent exon junction complex (EJC). Binds specifically histones H3 and H4.

It localises to the nucleus. It is found in the nucleolus. Chromatin-associated protein which contributes to the modulation of chromatin structure (such as super-helical structure of DNA) and function. Binds to chromatin of protein-coding genes throughout the genome to regulate nucleosome occupancy and chromatin accessibility, and to modulate the expression of target genes. The polypeptide is DEK domain-containing chromatin-associated protein 1 (Arabidopsis thaliana (Mouse-ear cress)).